The following is a 63-amino-acid chain: Gallinacin-4 (63 aa).

Positions 1–19 (MKILCFFIVLLFVAVHGAV) are cleaved as a signal peptide. Positions 20 to 25 (GFSRSP) are excised as a propeptide. 3 disulfides stabilise this stretch: cysteine 31–cysteine 59, cysteine 38–cysteine 53, and cysteine 43–cysteine 60.

It belongs to the beta-defensin family. As to expression, strong expression in the bone marrow and testis. Widely expressed. Weak expression in the ovarian stroma, but not expressed in the ovarian follicles.

It is found in the secreted. Its subcellular location is the cytoplasmic granule. Has bactericidal activity. Potent activity against S.typhimurium and S.entiriditis. The sequence is that of Gallinacin-4 (GAL4) from Gallus gallus (Chicken).